Here is a 331-residue protein sequence, read N- to C-terminus: MNLNAPFSPQPPLAAEHLPLTLMRLDDWLPINVSGPDAQSYLQGQLTADLPSLAATQHTLCGHCDAQGKLWSSLRLLRRRDGFTYLLRRSVATLQMLELKKYAVFAKASIVSDEGAVLLGVAGAQASEALGALFPRLPDADAPLLQAGRSHLLYMAWPQPRYLLICDDADEAERIFAPLSARARLADSAQWLALDIESGIPLIDEPNCDSFLPQAVNLQALGGISFTKGCYSGQEMVARAKYRGANRRALFWLRGSAERLPHASEDLELRLGDSWRRSGTVLAAQRLADGGVYLQAVLSSDLPADSVLRVRDDARSQLTLSPLPYSTDQQE.

Folate is bound by residues W28 and W191.

It belongs to the tRNA-modifying YgfZ family.

The protein localises to the cytoplasm. Folate-binding protein involved in regulating the level of ATP-DnaA and in the modification of some tRNAs. It is probably a key factor in regulatory networks that act via tRNA modification, such as initiation of chromosomal replication. The protein is tRNA-modifying protein YgfZ of Edwardsiella ictaluri (strain 93-146).